The sequence spans 1021 residues: MAMLLPQNPSQVHAAAVNGDKNTLHKLITESALRDSEDQFGRTPLMYCVLADRLDCAEVLLKAGAGINKTDHSQRTALHLAAQKGNVRFMKLLLSRHADWRLKDLEEMTPLHLASRHSSSKPLSLLLKHMAPGEVDTQDRNKQTALHWSAFYNHPEHVKLLIKHDSNIGIPDSEGKIPLHWAAHNKHPNATRTVRCILEAAPTESLLNWQDYEGRTPLHFAVADGNEAVVEVLTSYEGCSVTAYDNLFRTPLHWAALLGHAKIVHLLLERNKSGMIPSDSQGATPLHYGAQSNFADTVAVFLKHHSVRDEPDLEGRTAFMWAAGKGSNDVIKIMLDLKKDIDINMTDKYGGTALHAAALSGHVSTVRLLLEQGGMVDPLDVMKHTPLFRACEMGHRDVILTLIKGGARVDLVDIDGHSALHWAALGGNAEVCEVLMENGISPNLQDQAGRTPLQCAAYAGYINCMALLIQHDADPNIQDKEGRTALHWSCNNGYLDAVKLLLGCGAFPNHMEHTEERYTPLDYALLGEHQELTQFLLEHGALSIAAIQDIAASSIQALYKGYKVRRAFRERKKLLMRHEQLRKDAAKKREEERRREAEQQLSFAEAGQKQRVLLAAVGVEKLSLDEAEQRVKDSVAAKGHKHKKSSSAHNSQSRREKPSRAERRTREPETSDAPSIRSLPPVTPMSTKKCPVTREEVCVRETFGPDTGISLNCGSANERRSPAGSSRPGSAKPVHTGTHVAPGHMETTPTPKPRPSTTGAHSKNASQDTPQHNETQTTSKGNKPISEHKPTGSQPSNNTSVTRQKEKRQEKETHREKDKRSRTEGDKQTVREKQKGTGIERAKERLMGRTRKKLAEKEKEKKKDGTCSKNQAAVVIQRAWRRSCVRGRIRKVLCRSLKGVESAEATALLIQLLWEWPVLHDHTHRKPSDVQAPPTRIAGKKSSVLQNIYGAAPSKRGTSLRAAALKTQSQSQSQVLLDLSLRTHKQLSAVECVNLVDSVSQAKQFSYHLRPSSGASQSSQN.

ANK repeat units follow at residues 7 to 36 (QNPS…LRDS), 40 to 69 (FGRT…GINK), 73 to 102 (SQRT…DWRL), 106 to 137 (EEMT…EVDT), 141 to 170 (NKQT…NIGI), 174 to 206 (EGKI…TESL), 213 to 243 (EGRT…SVTA), 247 to 276 (LFRT…SGMI), 281 to 310 (QGAT…VRDE), 314 to 343 (EGRT…DIDI), 349 to 378 (YGGT…MVDP), 382 to 411 (MKHT…RVDL), 415 to 444 (DGHS…SPNL), 448 to 477 (AGRT…DPNI), 481 to 510 (EGRT…FPNH), and 516 to 546 (ERYT…SIAA). The D-box 1 signature appears at 483–491 (RTALHWSCN). The 30-residue stretch at 548-577 (QDIAASSIQALYKGYKVRRAFRERKKLLMR) folds into the IQ 1 domain. 2 stretches are compositionally biased toward basic and acidic residues: residues 579 to 598 (EQLR…REAE) and 653 to 669 (SRRE…REPE). Disordered regions lie at residues 579-602 (EQLR…QQLS), 632-691 (KDSV…KKCP), and 704-868 (GPDT…GTCS). Residues 722–731 (PAGSSRPGSA) are compositionally biased toward low complexity. Composition is skewed to polar residues over residues 759 to 781 (GAHS…TSKG) and 791 to 802 (TGSQPSNNTSVT). Over residues 803-866 (RQKEKRQEKE…KEKEKKKDGT (64 aa)) the composition is skewed to basic and acidic residues. Residues 862–870 (KKDGTCSKN) carry the D-box 2 motif. The IQ 2 domain maps to 869-898 (KNQAAVVIQRAWRRSCVRGRIRKVLCRSLK).

In terms of assembly, binds calmodulin via its IQ domains.

The protein resides in the cytoplasm. It is found in the cytoskeleton. In terms of biological role, required for normal renal development and establishment of left-right axis. Probably acts as a molecular switch between different Wnt signaling pathways. Inhibits the canonical Wnt pathway by targeting cytoplasmic disheveled for degradation by the ubiquitin-proteasome. This suggests that it is required in renal development to oppose the repression of terminal differentiation of tubular epithelial cells by Wnt signaling. In Danio rerio (Zebrafish), this protein is Inversin (invs).